The following is a 596-amino-acid chain: Structural protein precursor VP8 (596 aa).

Its subcellular location is the virion. Functionally, 120 subunits of the putative clamp protein VP8b appear to stabilize the capsid shell. This Oryza latifolia (Indian wild rice) protein is Structural protein precursor VP8.